Here is a 245-residue protein sequence, read N- to C-terminus: Large ribosomal subunit protein uL2 (245 aa).

Positions 198-245 (VSHPHGGGSHKRPGKPTTVARTAPPGQKVGHIAARKTGRAKRRAATKR) are disordered. Over residues 230 to 245 (AARKTGRAKRRAATKR) the composition is skewed to basic residues.

It belongs to the universal ribosomal protein uL2 family. Part of the 50S ribosomal subunit. Forms a bridge to the 30S subunit in the 70S ribosome.

Its function is as follows. One of the primary rRNA binding proteins. Required for association of the 30S and 50S subunits to form the 70S ribosome, for tRNA binding and peptide bond formation. It has been suggested to have peptidyltransferase activity; this is somewhat controversial. Makes several contacts with the 16S rRNA in the 70S ribosome. The protein is Large ribosomal subunit protein uL2 of Korarchaeum cryptofilum (strain OPF8).